Reading from the N-terminus, the 464-residue chain is Chitobiosyldiphosphodolichol beta-mannosyltransferase (464 aa).

Residues 1–2 are Lumenal-facing; sequence MA. The helical transmembrane segment at 3-23 threads the bilayer; the sequence is ASCLVLLALCLLLPLLLLGGW. The Cytoplasmic portion of the chain corresponds to 24–99; it reads KRWRRGRAAR…ELQSLAVGPR (76 aa). An intramembrane region (helical) is located at residues 100–120; the sequence is VFQYGVKVVLQAMYLLWKLMW. Over 121 to 464 the chain is Cytoplasmic; the sequence is REPGAYIFLQ…QTVLPLVMDT (344 aa). S242 carries the post-translational modification Phosphoserine. A disordered region spans residues 243–262; it reads PFRARSEPEDPVTERSAFTE.

This sequence belongs to the glycosyltransferase group 1 family. Glycosyltransferase 33 subfamily.

It localises to the endoplasmic reticulum membrane. It catalyses the reaction an N,N'-diacetylchitobiosyl-diphospho-di-trans,poly-cis-dolichol + GDP-alpha-D-mannose = a beta-D-Man-(1-&gt;4)-beta-D-GlcNAc-(1-&gt;4)-alpha-D-GlcNAc-diphospho-di-trans,poly-cis-dolichol + GDP + H(+). Its pathway is protein modification; protein glycosylation. Mannosyltransferase that operates in the biosynthetic pathway of dolichol-linked oligosaccharides, the glycan precursors employed in protein asparagine (N)-glycosylation. The assembly of dolichol-linked oligosaccharides begins on the cytosolic side of the endoplasmic reticulum membrane and finishes in its lumen. The sequential addition of sugars to dolichol pyrophosphate produces dolichol-linked oligosaccharides containing fourteen sugars, including two GlcNAcs, nine mannoses and three glucoses. Once assembled, the oligosaccharide is transferred from the lipid to nascent proteins by oligosaccharyltransferases. Catalyzes, on the cytoplasmic face of the endoplasmic reticulum, the addition of the first mannose residues to the dolichol-linked oligosaccharide chain, to produce Man1GlcNAc(2)-PP-dolichol core oligosaccharide. Man1GlcNAc(2)-PP-dolichol is a substrate for ALG2, the following enzyme in the biosynthetic pathway. In Homo sapiens (Human), this protein is Chitobiosyldiphosphodolichol beta-mannosyltransferase.